The following is a 4306-amino-acid chain: Cytoplasmic dynein 2 heavy chain 1 (4306 aa).

A stem region spans residues 1–1650 (MAGSLSDVRK…YVQMVDSELQ (1650 aa)). 145 to 152 (LGVVLRKS) serves as a coordination point for ATP. The stretch at 669 to 696 (KELEGYIQKLQNAAERLATENRRLRKWH) forms a coiled coil. 4 AAA regions span residues 1651 to 1875 (YTYE…VLRG), 1941 to 2161 (SALK…KQND), 2249 to 2505 (LTAD…WVLG), and 2617 to 2862 (HYGR…ESCK). ATP contacts are provided by residues 1689–1696 (GPAGTGKT), 1979–1986 (GPSGAGKS), 2291–2298 (GPEGCGKG), and 2655–2662 (GRSGVGRR). The stalk stretch occupies residues 2880–3168 (AISSSKRKEL…AEVSKAQETI (289 aa)). Coiled coils occupy residues 2896–2981 (LQAG…KEVQ), 3108–3199 (LETE…LATL), and 3407–3441 (IQHE…SLLE). AAA regions lie at residues 3243–3472 (LCTE…LIQD) and 3689–3904 (MALF…VIDR).

The protein belongs to the dynein heavy chain family. In terms of assembly, the cytoplasmic dynein complex 2 is probably composed by a heavy chain DYNC2H1 homodimer and a number of DYNC2LI1 light intermediate chains. Widely expressed both in ciliated and unciliated tissues. Detected in brain and testis (at protein level).

It is found in the cytoplasm. It localises to the cytoskeleton. The protein resides in the cilium axoneme. Its subcellular location is the cell membrane. In terms of biological role, may function as a motor for intraflagellar retrograde transport. Functions in cilia biogenesis. May play a role in transport between endoplasmic reticulum and Golgi or organization of the Golgi in cells. The polypeptide is Cytoplasmic dynein 2 heavy chain 1 (Dync2h1) (Rattus norvegicus (Rat)).